Here is a 262-residue protein sequence, read N- to C-terminus: Type II restriction enzyme HinfI (262 aa).

The catalysed reaction is Endonucleolytic cleavage of DNA to give specific double-stranded fragments with terminal 5'-phosphates.. Functionally, a P subtype restriction enzyme that recognizes the double-stranded sequence 5'-GANTC-3' and cleaves after G-1. This is Type II restriction enzyme HinfI (hinfIR) from Haemophilus influenzae.